The primary structure comprises 414 residues: MTIKSLALQCRDAAQVLSQLSADAKQALLLAMANALDTDATQILQANQRDVDAAREKGTGAAMLDRLTLTPARLSAVGAALREVAVLPDPVGQVTRDDVRPNGIRVQKVRVPLGVIAMIYEARPNVTADAAALCIKAGNGVILRGGSEAIHSNTAIARALQGALREANVPEAALTLVEDLRRETMLELLQLSDIVDLAIPRGGEGLIRFVAEHARVPVIKHYKGVCHLFVDASADVDLAVRLLVDGKASRPSACNSLETLLVHADIAERFLPAAAAALRARNVELRGDAATRAVLPEIAAASDDDYAAEFLDLILAIRVVPDLDTALAHIRQYGSDHTEVIATQTPANAETFVQSLRSAVVMVNASSRFSDGGELGLGAEIGISTTRLHSYGPMGLEALTVERFVVRGEGQVRH.

The protein belongs to the gamma-glutamyl phosphate reductase family.

The protein localises to the cytoplasm. It carries out the reaction L-glutamate 5-semialdehyde + phosphate + NADP(+) = L-glutamyl 5-phosphate + NADPH + H(+). It participates in amino-acid biosynthesis; L-proline biosynthesis; L-glutamate 5-semialdehyde from L-glutamate: step 2/2. Catalyzes the NADPH-dependent reduction of L-glutamate 5-phosphate into L-glutamate 5-semialdehyde and phosphate. The product spontaneously undergoes cyclization to form 1-pyrroline-5-carboxylate. The sequence is that of Gamma-glutamyl phosphate reductase from Xanthomonas campestris pv. campestris (strain ATCC 33913 / DSM 3586 / NCPPB 528 / LMG 568 / P 25).